The following is a 514-amino-acid chain: Pleiotropic regulator 1 (514 aa).

M1 is modified (N-acetylmethionine). S119 carries the post-translational modification Phosphoserine. The interval 135–160 (KADANRTAPSGSEYRHPGASDRPQPT) is disordered. S201 is subject to Phosphoserine. WD repeat units lie at residues 202 to 241 (GHLG…LKLS), 244 to 283 (GHIS…VIRH), 286 to 325 (GHLS…SVHT), 328 to 367 (GHTN…TRVT), 370 to 410 (NHKK…QNLS), 411 to 449 (GHNA…NFQR), and 460 to 499 (DSES…TEET). Phosphoserine is present on S391.

It belongs to the WD repeat PRL1/PRL2 family. As to quaternary structure, identified in the spliceosome C complex. Component of the PRP19-CDC5L splicing complex composed of a core complex comprising a homotetramer of PRPF19, CDC5L, PLRG1 and BCAS2, and at least three less stably associated proteins CTNNBL1, CWC15 and HSPA8. Interacts (via its WD40 repeat domain) directly with CDC5L (via its C-terminal); the interaction is required for mRNA splicing but not for spliceosome assembly. Component of the minor spliceosome, which splices U12-type introns. Within this complex, interacts with CRIPT. Also interacts directly in the complex with BCAS2 and PRPF19. Interacts with USB1.

The protein resides in the nucleus. It localises to the nucleus speckle. Involved in pre-mRNA splicing as component of the spliceosome. Component of the PRP19-CDC5L complex that forms an integral part of the spliceosome and is required for activating pre-mRNA splicing. As a component of the minor spliceosome, involved in the splicing of U12-type introns in pre-mRNAs. The polypeptide is Pleiotropic regulator 1 (PLRG1) (Homo sapiens (Human)).